A 271-amino-acid polypeptide reads, in one-letter code: Tryptophan synthase alpha chain (271 aa).

Residues E49 and D60 each act as proton acceptor in the active site.

Belongs to the TrpA family. In terms of assembly, tetramer of two alpha and two beta chains.

It carries out the reaction (1S,2R)-1-C-(indol-3-yl)glycerol 3-phosphate + L-serine = D-glyceraldehyde 3-phosphate + L-tryptophan + H2O. Its pathway is amino-acid biosynthesis; L-tryptophan biosynthesis; L-tryptophan from chorismate: step 5/5. The alpha subunit is responsible for the aldol cleavage of indoleglycerol phosphate to indole and glyceraldehyde 3-phosphate. The chain is Tryptophan synthase alpha chain from Burkholderia pseudomallei (strain K96243).